The following is a 254-amino-acid chain: tRNA (guanine-N(1)-)-methyltransferase (254 aa).

Residues Gly-113 and 133–138 (LGDFVL) contribute to the S-adenosyl-L-methionine site.

It belongs to the RNA methyltransferase TrmD family. In terms of assembly, homodimer.

It localises to the cytoplasm. It catalyses the reaction guanosine(37) in tRNA + S-adenosyl-L-methionine = N(1)-methylguanosine(37) in tRNA + S-adenosyl-L-homocysteine + H(+). In terms of biological role, specifically methylates guanosine-37 in various tRNAs. The sequence is that of tRNA (guanine-N(1)-)-methyltransferase from Herpetosiphon aurantiacus (strain ATCC 23779 / DSM 785 / 114-95).